Reading from the N-terminus, the 158-residue chain is Endoribonuclease YbeY (158 aa).

Zn(2+) contacts are provided by His124, His128, and His134.

It belongs to the endoribonuclease YbeY family. Zn(2+) is required as a cofactor.

Its subcellular location is the cytoplasm. Functionally, single strand-specific metallo-endoribonuclease involved in late-stage 70S ribosome quality control and in maturation of the 3' terminus of the 16S rRNA. This is Endoribonuclease YbeY from Caldanaerobacter subterraneus subsp. tengcongensis (strain DSM 15242 / JCM 11007 / NBRC 100824 / MB4) (Thermoanaerobacter tengcongensis).